Consider the following 70-residue polypeptide: Turripeptide Gsg9.2 (70 aa).

Residues 1-20 form the signal peptide; it reads MKVYCLLLVLLVGLVSQAHG. A Kazal-like domain is found at 21 to 70; the sequence is QLDKKCQMVCTMDYRPVCGSDGRTYPNKCTLTSTACMSQRSITVFHDGEC. 3 cysteine pairs are disulfide-bonded: C26/C56, C30/C49, and C38/C70.

This sequence belongs to the conopeptide P-like superfamily. Expressed by the venom duct.

It localises to the secreted. In terms of biological role, acts as a neurotoxin by inhibiting an ion channel. May also act as a serine protease inhibitor, since it possess the kazal serine protease inhibitor signature. The sequence is that of Turripeptide Gsg9.2 from Gemmula sogodensis (Gem-turris).